The primary structure comprises 97 residues: HssA/B-like protein 38 (97 aa).

The tract at residues 1-29 (MTLFSSISSISNPMTSSKSSISSFGSGTS) is disordered.

The protein belongs to the hssA/B family.

The protein is HssA/B-like protein 38 (hssl38) of Dictyostelium discoideum (Social amoeba).